We begin with the raw amino-acid sequence, 491 residues long: UDP-N-acetylmuramate--L-alanine ligase (491 aa).

126 to 132 contributes to the ATP binding site; it reads GTHGKTT.

This sequence belongs to the MurCDEF family.

The protein localises to the cytoplasm. The enzyme catalyses UDP-N-acetyl-alpha-D-muramate + L-alanine + ATP = UDP-N-acetyl-alpha-D-muramoyl-L-alanine + ADP + phosphate + H(+). It participates in cell wall biogenesis; peptidoglycan biosynthesis. Functionally, cell wall formation. The sequence is that of UDP-N-acetylmuramate--L-alanine ligase from Shigella sonnei (strain Ss046).